The following is a 448-amino-acid chain: Phosphoglucosamine mutase (448 aa).

The active-site Phosphoserine intermediate is the serine 100. Mg(2+)-binding residues include serine 100, aspartate 240, aspartate 242, and aspartate 244. Position 100 is a phosphoserine (serine 100).

Belongs to the phosphohexose mutase family. The cofactor is Mg(2+). In terms of processing, activated by phosphorylation.

It catalyses the reaction alpha-D-glucosamine 1-phosphate = D-glucosamine 6-phosphate. Functionally, catalyzes the conversion of glucosamine-6-phosphate to glucosamine-1-phosphate. This is Phosphoglucosamine mutase from Clostridium tetani (strain Massachusetts / E88).